The chain runs to 110 residues: Parvalbumin alpha (110 aa).

At Ser-2 the chain carries N-acetylserine. Ser-2, Ser-8, and Ser-24 each carry phosphoserine. EF-hand domains follow at residues Lys-39 to Asp-74 and Leu-78 to Ser-110. Residues Asp-52, Asp-54, Ser-56, Phe-58, Glu-60, Glu-63, Asp-91, Asp-93, Asp-95, Lys-97, and Glu-102 each contribute to the Ca(2+) site.

In terms of tissue distribution, expressed in the modiolar nerve root (at protein level).

In muscle, parvalbumin is thought to be involved in relaxation after contraction. It binds two calcium ions. The sequence is that of Parvalbumin alpha (Pvalb) from Mus musculus (Mouse).